The chain runs to 152 residues: SsrA-binding protein (152 aa).

This sequence belongs to the SmpB family.

It is found in the cytoplasm. Its function is as follows. Required for rescue of stalled ribosomes mediated by trans-translation. Binds to transfer-messenger RNA (tmRNA), required for stable association of tmRNA with ribosomes. tmRNA and SmpB together mimic tRNA shape, replacing the anticodon stem-loop with SmpB. tmRNA is encoded by the ssrA gene; the 2 termini fold to resemble tRNA(Ala) and it encodes a 'tag peptide', a short internal open reading frame. During trans-translation Ala-aminoacylated tmRNA acts like a tRNA, entering the A-site of stalled ribosomes, displacing the stalled mRNA. The ribosome then switches to translate the ORF on the tmRNA; the nascent peptide is terminated with the 'tag peptide' encoded by the tmRNA and targeted for degradation. The ribosome is freed to recommence translation, which seems to be the essential function of trans-translation. This is SsrA-binding protein from Rickettsia rickettsii.